We begin with the raw amino-acid sequence, 543 residues long: Chaperonin GroEL 2 (543 aa).

Residues 29 to 32 (TLGP), 86 to 90 (DGTTT), Gly-413, and Asp-495 each bind ATP. A disordered region spans residues 524–543 (KPEPKENAPTGAGMGGDFDY).

Belongs to the chaperonin (HSP60) family. In terms of assembly, forms a cylinder of 14 subunits composed of two heptameric rings stacked back-to-back. Interacts with the co-chaperonin GroES.

Its subcellular location is the cytoplasm. It carries out the reaction ATP + H2O + a folded polypeptide = ADP + phosphate + an unfolded polypeptide.. Together with its co-chaperonin GroES, plays an essential role in assisting protein folding. The GroEL-GroES system forms a nano-cage that allows encapsulation of the non-native substrate proteins and provides a physical environment optimized to promote and accelerate protein folding. In Acaryochloris marina (strain MBIC 11017), this protein is Chaperonin GroEL 2.